The primary structure comprises 140 residues: 6,7-dimethyl-8-ribityllumazine synthase (140 aa).

Residues F11, 43 to 45 (SFD), and 67 to 69 (CVI) contribute to the 5-amino-6-(D-ribitylamino)uracil site. 72 to 73 (DT) is a binding site for (2S)-2-hydroxy-3-oxobutyl phosphate. Residue H75 is the Proton donor of the active site. L100 provides a ligand contact to 5-amino-6-(D-ribitylamino)uracil. R115 lines the (2S)-2-hydroxy-3-oxobutyl phosphate pocket.

It belongs to the DMRL synthase family. In terms of assembly, forms an icosahedral capsid composed of 60 subunits, arranged as a dodecamer of pentamers.

The catalysed reaction is (2S)-2-hydroxy-3-oxobutyl phosphate + 5-amino-6-(D-ribitylamino)uracil = 6,7-dimethyl-8-(1-D-ribityl)lumazine + phosphate + 2 H2O + H(+). It participates in cofactor biosynthesis; riboflavin biosynthesis; riboflavin from 2-hydroxy-3-oxobutyl phosphate and 5-amino-6-(D-ribitylamino)uracil: step 1/2. Its function is as follows. Catalyzes the formation of 6,7-dimethyl-8-ribityllumazine by condensation of 5-amino-6-(D-ribitylamino)uracil with 3,4-dihydroxy-2-butanone 4-phosphate. This is the penultimate step in the biosynthesis of riboflavin. The chain is 6,7-dimethyl-8-ribityllumazine synthase from Methanococcus vannielii (strain ATCC 35089 / DSM 1224 / JCM 13029 / OCM 148 / SB).